Consider the following 661-residue polypeptide: MKGLFPAGGGNPPSSYLSRFLPHRKERSPENVTSGRNGVPHRGRMLSLALGALGIVYGDIGTSPLYTIKECFHGTHAIAPNPANIMGVLSLILWSLTMVVSIKYITFMMRADNRGEGGIFALLALVPMSGKLISRGARAVVVMAALTGAALLYGDGFITPSITVLSAIEGLEVATDAAKNLIVPLACGILLGLFLVQSRGTAKIGRIFGPVMLVWFATIATLGLLCIVRNPVVLDAVSPVYAYRFFAEHHVHGLVVLGSVVLSITGGEALYADMGHFGRVPIRLSWFAMVFPSLLLNYFGQGAALLEQPDLAFNPFYGLVPRVLLLPMVALATMASIIASQAMISGAFSLTRQAVQLGYIPRVTIVHTSAETEGQIYIPEVNRLMMVVCIGLVLVFRASSGLAGAYGVAVTANMAITSVVYFFVATRTWGWSTAKTAPLVGLFLVFDITYFGSNLLKFFDGGWFPLAVALVIVIVMASWKDGRAELYKHIVKSSPTLDMFLEDVSRHNVHRVAGTAVFMASTSSLTPPSLMHHFKHNKVLHEEVILLTIEVTHTPQVPAAERIRVEELGEGFHRIVARFGFMETPNVPQIMDSAYRARLVPQVLPVSYYLGRETLIPSGPSRMMPWRKRLFAFLSRNSQSATNYFGLPPGQVVELGVQIEF.

Residues 1-11 (MKGLFPAGGGN) show a composition bias toward gly residues. The disordered stretch occupies residues 1–38 (MKGLFPAGGGNPPSSYLSRFLPHRKERSPENVTSGRNG). A run of 12 helical transmembrane segments spans residues 48–68 (LALGALGIVYGDIGTSPLYTI), 85–105 (IMGVLSLILWSLTMVVSIKYI), 139–159 (AVVVMAALTGAALLYGDGFIT), 177–197 (AAKNLIVPLACGILLGLFLVQ), 207–227 (IFGPVMLVWFATIATLGLLCI), 251–271 (VHGLVVLGSVVLSITGGEALY), 286–306 (WFAMVFPSLLLNYFGQGAALL), 324–344 (LLLPMVALATMASIIASQAMI), 384–404 (LMMVVCIGLVLVFRASSGLAG), 405–425 (AYGVAVTANMAITSVVYFFVA), 436–456 (TAPLVGLFLVFDITYFGSNLL), and 458–478 (FFDGGWFPLAVALVIVIVMAS).

Belongs to the HAK/KUP transporter (TC 2.A.72) family.

The protein localises to the cell inner membrane. The enzyme catalyses K(+)(in) + H(+)(in) = K(+)(out) + H(+)(out). Its function is as follows. Transport of potassium into the cell. Likely operates as a K(+):H(+) symporter. The chain is Probable potassium transport system protein Kup 1 from Syntrophobacter fumaroxidans (strain DSM 10017 / MPOB).